A 170-amino-acid chain; its full sequence is Lipoprotein signal peptidase (170 aa).

Helical transmembrane passes span 9–29 (IGSV…KYLV), 72–92 (LFFL…ILKE), and 93–113 (TNKI…GNII). Active-site residues include Asp-124 and Asp-146. The helical transmembrane segment at 142-162 (FNFADSYVVIGITLFIIYDLF) threads the bilayer.

Belongs to the peptidase A8 family.

The protein resides in the cell inner membrane. The enzyme catalyses Release of signal peptides from bacterial membrane prolipoproteins. Hydrolyzes -Xaa-Yaa-Zaa-|-(S,diacylglyceryl)Cys-, in which Xaa is hydrophobic (preferably Leu), and Yaa (Ala or Ser) and Zaa (Gly or Ala) have small, neutral side chains.. The protein operates within protein modification; lipoprotein biosynthesis (signal peptide cleavage). Functionally, this protein specifically catalyzes the removal of signal peptides from prolipoproteins. The protein is Lipoprotein signal peptidase of Borrelia hermsii (strain HS1 / DAH).